Consider the following 75-residue polypeptide: Exodeoxyribonuclease 7 small subunit (75 aa).

This sequence belongs to the XseB family. In terms of assembly, heterooligomer composed of large and small subunits.

The protein localises to the cytoplasm. The catalysed reaction is Exonucleolytic cleavage in either 5'- to 3'- or 3'- to 5'-direction to yield nucleoside 5'-phosphates.. Bidirectionally degrades single-stranded DNA into large acid-insoluble oligonucleotides, which are then degraded further into small acid-soluble oligonucleotides. This is Exodeoxyribonuclease 7 small subunit from Listeria innocua serovar 6a (strain ATCC BAA-680 / CLIP 11262).